Consider the following 154-residue polypeptide: D-aminoacyl-tRNA deacylase (154 aa).

The short motif at 142–143 is the Gly-cisPro motif, important for rejection of L-amino acids element; the sequence is GP.

The protein belongs to the DTD family. Homodimer.

The protein resides in the cytoplasm. The enzyme catalyses glycyl-tRNA(Ala) + H2O = tRNA(Ala) + glycine + H(+). The catalysed reaction is a D-aminoacyl-tRNA + H2O = a tRNA + a D-alpha-amino acid + H(+). Functionally, an aminoacyl-tRNA editing enzyme that deacylates mischarged D-aminoacyl-tRNAs. Also deacylates mischarged glycyl-tRNA(Ala), protecting cells against glycine mischarging by AlaRS. Acts via tRNA-based rather than protein-based catalysis; rejects L-amino acids rather than detecting D-amino acids in the active site. By recycling D-aminoacyl-tRNA to D-amino acids and free tRNA molecules, this enzyme counteracts the toxicity associated with the formation of D-aminoacyl-tRNA entities in vivo and helps enforce protein L-homochirality. The protein is D-aminoacyl-tRNA deacylase of Polaromonas naphthalenivorans (strain CJ2).